The sequence spans 130 residues: Large ribosomal subunit protein bL20c (130 aa).

Belongs to the bacterial ribosomal protein bL20 family.

It localises to the plastid. Its subcellular location is the chloroplast. In terms of biological role, binds directly to 23S ribosomal RNA and is necessary for the in vitro assembly process of the 50S ribosomal subunit. It is not involved in the protein synthesizing functions of that subunit. This is Large ribosomal subunit protein bL20c from Fagopyrum esculentum subsp. ancestrale (Wild buckwheat).